The chain runs to 362 residues: Cytoskeleton protein RodZ (362 aa).

Over 1–111 the chain is Cytoplasmic; it reads MNTEASQDQT…LGKKHKKRDG (111 aa). The region spanning 19–79 is the HTH cro/C1-type domain; that stretch reads LRQARESLGL…KLVHLPEDEL (61 aa). A DNA-binding region (H-T-H motif) is located at residues 30–49; it reads QQTVAERLCLKVSTIRDIEE. Residues 112 to 132 traverse the membrane as a helical; Signal-anchor for type II membrane protein segment; sequence WLMSFTWLIVLVVLGLTGAWW. The Periplasmic portion of the chain corresponds to 133 to 362; sequence WQNHQAQQAE…RVARLTVGVE (230 aa). The tract at residues 151–277 is disordered; sequence SAQLSQNGGQ…LPTADAGVSG (127 aa). Residues 193–221 are compositionally biased toward low complexity; it reads STSAVTNSATTSSATTSSVPTTSSVPKTT. The span at 223-242 shows a compositional bias: polar residues; the sequence is VPKTNSTEPVDTANTNTTMH. Over residues 246 to 259 the composition is skewed to low complexity; it reads AASAAVSPSQVPQP.

This sequence belongs to the RodZ family.

It localises to the cell inner membrane. Its function is as follows. Cytoskeletal protein that is involved in cell-shape control through regulation of the length of the long axis. The protein is Cytoskeleton protein RodZ of Yersinia pseudotuberculosis serotype IB (strain PB1/+).